The sequence spans 372 residues: Proton-coupled zinc antiporter SLC30A2 (372 aa).

Residues 1–140 (MEAKEKQHLL…TMNFGWQRAE (140 aa)) are Cytoplasmic-facing. A Mitochondrial localization signal motif is present at residues 51–54 (HHCH). The Zn(2+) site is built by cysteine 53, histidine 106, and aspartate 110. The helical transmembrane segment at 141 to 161 (ILGALVSVLSIWVVTGVLVYL) threads the bilayer. The Lumenal segment spans residues 162–175 (AVERLISGDYEIDG). A helical transmembrane segment spans residues 176 to 196 (GTMLITSGCAVAVNIIMGLTL). At 197-220 (HQSGHGHSHGTTNQQEENPSVRAA) the chain is on the cytoplasmic side. The chain crosses the membrane as a helical span at residues 221-241 (FIHVIGDFMQSMGVLVAAYIL). Zn(2+) is bound by residues histidine 223 and aspartate 227. The Lumenal segment spans residues 242–249 (YFKPEYKY). Residues 250–270 (VDPICTFVFSILVLGTTLTIL) form a helical membrane-spanning segment. Over 271-304 (RDVILVLMEGTPKGVDFTAVRDLLLSVEGVEALH) the chain is Cytoplasmic. Residues 294–295 (LL) carry the Lysosomal targeting motif motif. Residue serine 296 is modified to Phosphoserine. Zn(2+) is bound by residues histidine 304, histidine 321, and glutamate 355. The helical transmembrane segment at 305–325 (SLHIWALTVAQPVLSVHIAIA) threads the bilayer. Topologically, residues 326–372 (QNTDAQAVLKTASSRLQGKFHFHTVTIQIEDYSEDMKDCQACQGPSD) are lumenal.

This sequence belongs to the cation diffusion facilitator (CDF) transporter (TC 2.A.4) family. SLC30A subfamily. As to quaternary structure, homodimer. Interacts (via lysosomal targeting motif) with AP3D1; in AP-3-mediated transport to lysosomes. Interacts with TMEM163. Post-translationally, phosphorylated at Ser-296. Phosphorylation at Ser-296 prevents localization to lysosomes. Dephosphorylation of Ser-296 which triggers localization to lysosomes, accumulation of zinc into lysosomes and lysosomal-mediated cell death is induced by TNF-alpha.

The protein localises to the cytoplasmic vesicle. Its subcellular location is the secretory vesicle membrane. The protein resides in the zymogen granule membrane. It localises to the endosome membrane. It is found in the lysosome membrane. The protein localises to the mitochondrion inner membrane. Its subcellular location is the cell membrane. The enzyme catalyses Zn(2+)(in) + 2 H(+)(out) = Zn(2+)(out) + 2 H(+)(in). Functionally, electroneutral proton-coupled antiporter concentrating zinc ions into a variety of intracellular organelles including endosomes, zymogen granules and mitochondria. Thereby, plays a crucial role in cellular zinc homeostasis to confer upon cells protection against its potential cytotoxicity. Regulates the zinc concentration of milk, through the transport of zinc ions into secretory vesicles of mammary cells. By concentrating zinc ions into lysosomes participates to lysosomal-mediated cell death during early mammary gland involution. Electroneutral proton-coupled antiporter mediating the efflux of zinc ions through the plasma membrane. This Homo sapiens (Human) protein is Proton-coupled zinc antiporter SLC30A2.